The following is a 369-amino-acid chain: DNA replication and repair protein RecF (369 aa).

30–37 lines the ATP pocket; it reads GENAQGKT.

The protein belongs to the RecF family.

The protein localises to the cytoplasm. Its function is as follows. The RecF protein is involved in DNA metabolism; it is required for DNA replication and normal SOS inducibility. RecF binds preferentially to single-stranded, linear DNA. It also seems to bind ATP. The chain is DNA replication and repair protein RecF from Oceanobacillus iheyensis (strain DSM 14371 / CIP 107618 / JCM 11309 / KCTC 3954 / HTE831).